The sequence spans 203 residues: Small ribosomal subunit protein uS4c (203 aa).

The interval 18-42 (LPGLTSKRPKNRKDSMNMNRSSSRK) is disordered. Residues 33-42 (MNMNRSSSRK) are compositionally biased toward polar residues. Residues 91 to 152 (MRLDNIIFRL…QPRLRAIIKK (62 aa)) enclose the S4 RNA-binding domain.

The protein belongs to the universal ribosomal protein uS4 family. Part of the 30S ribosomal subunit. Contacts protein S5. The interaction surface between S4 and S5 is involved in control of translational fidelity.

It is found in the plastid. The protein resides in the chloroplast. Functionally, one of the primary rRNA binding proteins, it binds directly to 16S rRNA where it nucleates assembly of the body of the 30S subunit. In terms of biological role, with S5 and S12 plays an important role in translational accuracy. The polypeptide is Small ribosomal subunit protein uS4c (rps4) (Pinus koraiensis (Korean pine)).